A 247-amino-acid polypeptide reads, in one-letter code: Phosphoribosylaminoimidazole-succinocarboxamide synthase (247 aa).

Belongs to the SAICAR synthetase family.

The catalysed reaction is 5-amino-1-(5-phospho-D-ribosyl)imidazole-4-carboxylate + L-aspartate + ATP = (2S)-2-[5-amino-1-(5-phospho-beta-D-ribosyl)imidazole-4-carboxamido]succinate + ADP + phosphate + 2 H(+). Its pathway is purine metabolism; IMP biosynthesis via de novo pathway; 5-amino-1-(5-phospho-D-ribosyl)imidazole-4-carboxamide from 5-amino-1-(5-phospho-D-ribosyl)imidazole-4-carboxylate: step 1/2. The protein is Phosphoribosylaminoimidazole-succinocarboxamide synthase of Synechococcus sp. (strain JA-2-3B'a(2-13)) (Cyanobacteria bacterium Yellowstone B-Prime).